A 190-amino-acid polypeptide reads, in one-letter code: Small ribosomal subunit protein uS5 (190 aa).

Residues Phe22–Val85 enclose the S5 DRBM domain.

It belongs to the universal ribosomal protein uS5 family. In terms of assembly, part of the 30S ribosomal subunit. Contacts proteins S4 and S8.

With S4 and S12 plays an important role in translational accuracy. Functionally, located at the back of the 30S subunit body where it stabilizes the conformation of the head with respect to the body. The polypeptide is Small ribosomal subunit protein uS5 (Rhodopseudomonas palustris (strain BisA53)).